The primary structure comprises 762 residues: Glucan endo-1,3-beta-glucosidase BGN13.1 (762 aa).

The N-terminal stretch at 1–16 (MLKLTALVALLLGAAS) is a signal peptide. Positions 17-33 (ATPTPSPPASDEGITKR) are excised as a propeptide.

Belongs to the glycosyl hydrolase 55 family. Does not seem to be glycosylated.

Its subcellular location is the secreted. The enzyme catalyses Hydrolysis of (1-&gt;3)-beta-D-glucosidic linkages in (1-&gt;3)-beta-D-glucans.. Its activity is regulated as follows. Inhibited by glucose. Functionally, involved in mycoparasitism, hydrolyzes yeast and fungal cell walls. Classified as a small-oligosaccharide-producing type based its the end products: glucose, laminaribiose or laminaritetraose. This is Glucan endo-1,3-beta-glucosidase BGN13.1 (bgn13.1) from Trichoderma harzianum (Hypocrea lixii).